The chain runs to 584 residues: Arginine--tRNA ligase (584 aa).

The 'HIGH' region signature appears at 126–136; it reads PNIAKEMHVGH.

Belongs to the class-I aminoacyl-tRNA synthetase family. As to quaternary structure, monomer.

It is found in the cytoplasm. The enzyme catalyses tRNA(Arg) + L-arginine + ATP = L-arginyl-tRNA(Arg) + AMP + diphosphate. The protein is Arginine--tRNA ligase of Nostoc punctiforme (strain ATCC 29133 / PCC 73102).